Consider the following 478-residue polypeptide: Receptor-interacting serine/threonine-protein kinase 3 (478 aa).

Residue Ser-2 is modified to Phosphoserine. One can recognise a Protein kinase domain in the interval 22 to 290 (LENLGFVGKG…CESKTNNVYI (269 aa)). Residues 28-36 (VGKGGFGAV) and Lys-51 contribute to the ATP site. The active-site Proton acceptor is Asp-143. Phosphoserine is present on Ser-165. Thr-185 carries the phosphothreonine modification. Ser-201 is modified (phosphoserine; by autocatalysis). Thr-228 carries the post-translational modification Phosphothreonine. Ser-229 carries the post-translational modification Phosphoserine; by autocatalysis. A Phosphothreonine modification is found at Thr-254. Phosphoserine is present on residues Ser-301 and Ser-323. Residues 311 to 330 (RSSDTKLSARESSQKGTEVD) are disordered. The segment covering 313 to 330 (SDTKLSARESSQKGTEVD) has biased composition (basic and acidic residues). At Thr-335 the chain carries Phosphothreonine. Phosphoserine is present on residues Ser-350, Ser-369, and Ser-380. Residues 362 to 429 (ERRGKEASFG…RNSNPWYTWN (68 aa)) are disordered. The span at 376–385 (AGTSSDTLAG) shows a compositional bias: polar residues. Thr-392 carries the phosphothreonine modification. Residues 413-429 (QRNQGDGRNSNPWYTWN) show a composition bias toward polar residues. An RIP homotypic interaction motif (RHIM) motif is present at residues 437–461 (LQSIVLNNCSEVQIGQHNCMSVQPR). The residue at position 474 (Arg-474) is an Omega-N-methylarginine.

This sequence belongs to the protein kinase superfamily. TKL Ser/Thr protein kinase family. In terms of assembly, interacts (via RIP homotypic interaction motif) with RIPK1 (via RIP homotypic interaction motif); this interaction induces RIPK1 phosphorylation and formation of a RIPK1-RIPK3 necrosis-inducing complex. Interacts with MLKL; the interaction is direct and triggers necroptosis. Interacts with ZBP1 (via RIP homotypic interaction motif); interaction with ZBP1 activates RIPK3, triggering necroptosis. Upon TNF-induced necrosis, the RIPK1-RIPK3 dimer further interacts with PGAM5 and MLKL; the formation of this complex leads to PGAM5 phosphorylation and increase in PGAM5 phosphatase activity. Binds TRAF2 and is recruited to the TNFR-1 signaling complex. Interacts with PYGL, GLUL and GLUD1; these interactions result in activation of these metabolic enzymes. Interacts with BIRC2/c-IAP1, BIRC3/c-IAP2 and XIAP/BIRC4. Interacts with ARHGEF2. Interacts with PELI1 (via atypical FHA domain); the phosphorylated form at Thr-185 binds preferentially to PELI1. Interacts with BUB1B, TRAF2 and STUB1. Interacts with CASP6. Component of the AIM2 PANoptosome complex, a multiprotein complex that drives inflammatory cell death (PANoptosis). Post-translationally, RIPK1 and RIPK3 undergo reciprocal auto- and trans-phosphorylation. Autophosphorylated following interaction with ZBP1. Phosphorylation of Ser-201 plays a role in the necroptotic function of RIPK3. Autophosphorylates at Thr-228 and Ser-229 following activation by ZBP1: phosphorylation at these sites is a hallmark of necroptosis and is required for binding MLKL. Phosphorylation at Thr-185 is important for its kinase activity, interaction with PELI1 and for its ability to mediate TNF-induced necroptosis. Polyubiquitinated with 'Lys-48' and 'Lys-63'-linked chains by BIRC2/c-IAP1 and BIRC3/c-IAP2, leading to activation of NF-kappa-B. Ubiquitinated by STUB1 leading to its subsequent proteasome-dependent degradation.

The protein localises to the cytoplasm. Its subcellular location is the cytosol. It is found in the nucleus. The enzyme catalyses L-seryl-[protein] + ATP = O-phospho-L-seryl-[protein] + ADP + H(+). It catalyses the reaction L-threonyl-[protein] + ATP = O-phospho-L-threonyl-[protein] + ADP + H(+). Activity is stimulated by ZBP1, which senses double-stranded Z-RNA structures. RIPK3-dependent necroptosis is inhibited by RIPK1: RIPK1 prevents the ZBP1-induced activation of RIPK3 via FADD-mediated recruitment of CASP8, which cleaves RIPK1 and limits TNF-induced necroptosis. Functionally, serine/threonine-protein kinase that activates necroptosis and apoptosis, two parallel forms of cell death. Necroptosis, a programmed cell death process in response to death-inducing TNF-alpha family members, is triggered by RIPK3 following activation by ZBP1. Activated RIPK3 forms a necrosis-inducing complex and mediates phosphorylation of MLKL, promoting MLKL localization to the plasma membrane and execution of programmed necrosis characterized by calcium influx and plasma membrane damage. In addition to TNF-induced necroptosis, necroptosis can also take place in the nucleus in response to orthomyxoviruses infection: following ZBP1 activation, which senses double-stranded Z-RNA structures, nuclear RIPK3 catalyzes phosphorylation and activation of MLKL, promoting disruption of the nuclear envelope and leakage of cellular DNA into the cytosol. Also regulates apoptosis: apoptosis depends on RIPK1, FADD and CASP8, and is independent of MLKL and RIPK3 kinase activity. Phosphorylates RIPK1: RIPK1 and RIPK3 undergo reciprocal auto- and trans-phosphorylation. In some cell types, also able to restrict viral replication by promoting cell death-independent responses. In response to flavivirus infection in neurons, promotes a cell death-independent pathway that restricts viral replication: together with ZBP1, promotes a death-independent transcriptional program that modifies the cellular metabolism via up-regulation expression of the enzyme ACOD1/IRG1 and production of the metabolite itaconate. Itaconate inhibits the activity of succinate dehydrogenase, generating a metabolic state in neurons that suppresses replication of viral genomes. RIPK3 binds to and enhances the activity of three metabolic enzymes: GLUL, GLUD1, and PYGL. These metabolic enzymes may eventually stimulate the tricarboxylic acid cycle and oxidative phosphorylation, which could result in enhanced ROS production. The polypeptide is Receptor-interacting serine/threonine-protein kinase 3 (Rattus norvegicus (Rat)).